The chain runs to 284 residues: Nucleotide-binding protein Sbal_3671 (284 aa).

8–15 (GRSGSGKS) is a binding site for ATP. 56 to 59 (DVRN) serves as a coordination point for GTP.

Belongs to the RapZ-like family.

Displays ATPase and GTPase activities. In Shewanella baltica (strain OS155 / ATCC BAA-1091), this protein is Nucleotide-binding protein Sbal_3671.